Consider the following 446-residue polypeptide: MSRKYFGTDGIRGRVGEYPITPDFMLKLGWAAGMAFRKQGNCRVLVGKDTRISGYMFESALEAGLSAAGADVLLLGPMPTPAIAYLTRTFHAEAGIVISASHNPHDDNGIKFFSGQGTKLPDEIELMIEELLDQPMTVVDSSKLGKVSRINDAAGRYIEFCKSSVPTSTGFEGLKLVVDCAHGATYKVAPSVFRELGAEVTVLHAQPDGLNINENCGSTHIESLQAAVLVGHADLGIAFDGDGDRVLMVDHTGAIVDGDELLFIIARDLHERGKLQGGVVGTLMSNLGLELALKDLDIPFVRAKVGDRYVMAELLERGWLVGGENSGHVVCCNHTTTGDAIIAALQVLLALRRRGETLAQARQALRKCPQVLINVRFGASKVDPLEHPAVKEASARVTEDMAGRGRVLLRKSGTEPLVRVMVEGDDENQVRTHAEALAKLVAEVCV.

Ser-101 acts as the Phosphoserine intermediate in catalysis. 4 residues coordinate Mg(2+): Ser-101, Asp-240, Asp-242, and Asp-244. Phosphoserine is present on Ser-101.

It belongs to the phosphohexose mutase family. The cofactor is Mg(2+). In terms of processing, activated by phosphorylation.

It catalyses the reaction alpha-D-glucosamine 1-phosphate = D-glucosamine 6-phosphate. Functionally, catalyzes the conversion of glucosamine-6-phosphate to glucosamine-1-phosphate. This Pseudomonas putida (strain W619) protein is Phosphoglucosamine mutase.